Here is a 190-residue protein sequence, read N- to C-terminus: Double zinc ribbon protein MJ0416 (190 aa).

A DZANK-type zinc finger spans residues 134–183 (CPNCNNYISDSWKYCAHCGAKLKEEEEEVLRCPNCKRPVQPEWIVCPYCG).

In Methanocaldococcus jannaschii (strain ATCC 43067 / DSM 2661 / JAL-1 / JCM 10045 / NBRC 100440) (Methanococcus jannaschii), this protein is Double zinc ribbon protein MJ0416.